A 253-amino-acid polypeptide reads, in one-letter code: MDRSPLFLIIMGAPGSGKGTQSKLLASQLSLQHISSGDLLRNAVSQNTPLGQEIKSYLDQGKLLPDQLVWKLVHEKLDELQQDTLLRKLSFLSRSENGAILDGFPRTVAQAKLLNEFLCSYFPDYKIILLDISDEEVLNRLTSRYICPSCQGIYNKQQGFSRCPKCLVELTRRSDDTPEVILDRIQTYKQETQPVLDYYAALQRLITIDANAPTQQVFKNILDALPESNYTIHKKSCCDCCDCDCYDGCDCEE.

Residue 15–20 (GSGKGT) participates in ATP binding. Residues 35–64 (SSGDLLRNAVSQNTPLGQEIKSYLDQGKLL) are NMP. AMP is bound by residues S36, R41, 62 to 64 (KLL), 103 to 106 (GFPR), and Q110. The tract at residues 143–176 (SRYICPSCQGIYNKQQGFSRCPKCLVELTRRSDD) is LID. R144 contacts ATP. Zn(2+) contacts are provided by C147 and C150. 153–154 (IY) provides a ligand contact to ATP. Positions 163 and 166 each coordinate Zn(2+). AMP contacts are provided by R173 and R184. A212 provides a ligand contact to ATP.

Belongs to the adenylate kinase family. Monomer.

It localises to the cytoplasm. It catalyses the reaction AMP + ATP = 2 ADP. The protein operates within purine metabolism; AMP biosynthesis via salvage pathway; AMP from ADP: step 1/1. Its function is as follows. Catalyzes the reversible transfer of the terminal phosphate group between ATP and AMP. Plays an important role in cellular energy homeostasis and in adenine nucleotide metabolism. This chain is Adenylate kinase, found in Chlamydia muridarum (strain MoPn / Nigg).